Consider the following 458-residue polypeptide: Bifunctional protein GlmU (458 aa).

Positions 1 to 224 (MTVIALAAGK…PKVAVGVNNQ (224 aa)) are pyrophosphorylase. UDP-N-acetyl-alpha-D-glucosamine contacts are provided by residues 6-9 (LAAG), K20, Q71, and 76-77 (GT). Residue D99 participates in Mg(2+) binding. Residues G136, E150, N165, and N222 each contribute to the UDP-N-acetyl-alpha-D-glucosamine site. Residue N222 coordinates Mg(2+). Residues 225-245 (LELARATRLLFKRKALRLMED) are linker. Residues 246–458 (GVLMIDPRTV…TAETEEKEQV (213 aa)) are N-acetyltransferase. 2 residues coordinate UDP-N-acetyl-alpha-D-glucosamine: R328 and K346. The active-site Proton acceptor is H358. Y361 and N372 together coordinate UDP-N-acetyl-alpha-D-glucosamine. Acetyl-CoA is bound by residues 381–382 (NY), S401, S419, and R436.

This sequence in the N-terminal section; belongs to the N-acetylglucosamine-1-phosphate uridyltransferase family. It in the C-terminal section; belongs to the transferase hexapeptide repeat family. Homotrimer. Requires Mg(2+) as cofactor.

It is found in the cytoplasm. The catalysed reaction is alpha-D-glucosamine 1-phosphate + acetyl-CoA = N-acetyl-alpha-D-glucosamine 1-phosphate + CoA + H(+). It catalyses the reaction N-acetyl-alpha-D-glucosamine 1-phosphate + UTP + H(+) = UDP-N-acetyl-alpha-D-glucosamine + diphosphate. It participates in nucleotide-sugar biosynthesis; UDP-N-acetyl-alpha-D-glucosamine biosynthesis; N-acetyl-alpha-D-glucosamine 1-phosphate from alpha-D-glucosamine 6-phosphate (route II): step 2/2. It functions in the pathway nucleotide-sugar biosynthesis; UDP-N-acetyl-alpha-D-glucosamine biosynthesis; UDP-N-acetyl-alpha-D-glucosamine from N-acetyl-alpha-D-glucosamine 1-phosphate: step 1/1. Its pathway is bacterial outer membrane biogenesis; LPS lipid A biosynthesis. Catalyzes the last two sequential reactions in the de novo biosynthetic pathway for UDP-N-acetylglucosamine (UDP-GlcNAc). The C-terminal domain catalyzes the transfer of acetyl group from acetyl coenzyme A to glucosamine-1-phosphate (GlcN-1-P) to produce N-acetylglucosamine-1-phosphate (GlcNAc-1-P), which is converted into UDP-GlcNAc by the transfer of uridine 5-monophosphate (from uridine 5-triphosphate), a reaction catalyzed by the N-terminal domain. The protein is Bifunctional protein GlmU of Bdellovibrio bacteriovorus (strain ATCC 15356 / DSM 50701 / NCIMB 9529 / HD100).